Consider the following 167-residue polypeptide: Leukotoxin-activating lysine-acyltransferase LktC serotype A1 (167 aa).

Residues H22 and D91 contribute to the active site.

It belongs to the RTX toxin acyltransferase family.

Its subcellular location is the cytoplasm. The catalysed reaction is a fatty acyl-[ACP] + L-lysyl-[protein] = N(6)-(fatty acyl)-L-lysyl-[protein] + holo-[ACP] + H(+). Functionally, involved in fatty acylation of the protoxin (LktA) at two internal lysine residues, thereby converting it to the active toxin. The polypeptide is Leukotoxin-activating lysine-acyltransferase LktC serotype A1 (lktC) (Mannheimia haemolytica (Pasteurella haemolytica)).